The sequence spans 1026 residues: Adenylate-forming reductase 06235 (1026 aa).

The adenylation (A) domain stretch occupies residues 37–422 (FEFHAKANPD…LGRIDNQVKI (386 aa)). AMP-binding positions include 332–333 (VT) and 412–415 (HLGR). A thiolation and peptide carrier (T) domain region spans residues 556–638 (SLVSTVGSTV…ALFIWILVTK (83 aa)). The interval 682–901 (CIRRVCARIY…PPTKMWVKGV (220 aa)) is reductase (R) domain. Residues 685-688 (RVCA), 769-771 (TAL), and tyrosine 840 each bind NADP(+).

Belongs to the adenylate-forming reductase family.

In terms of biological role, adenylate-forming reductase, a natural product biosynthesis enzyme that resembles non-ribosomal peptide synthetases, yet serves to modify one substrate, rather than to condense two or more building blocks. The A-domain preferentially accepts L-serine, L-alanine and L-valine as substrates. The natural product of the enzyme is not yet known. This Coprinopsis cinerea (strain Okayama-7 / 130 / ATCC MYA-4618 / FGSC 9003) (Inky cap fungus) protein is Adenylate-forming reductase 06235.